The primary structure comprises 151 residues: S-protein homolog 27 (151 aa).

N-linked (GlcNAc...) asparagine glycosylation is found at Asn91 and Asn123.

This sequence belongs to the plant self-incompatibility (S1) protein family.

It is found in the secreted. The protein is S-protein homolog 27 of Arabidopsis thaliana (Mouse-ear cress).